The following is a 504-amino-acid chain: Dihydrolipoamide dehydrogenase (504 aa).

Residues 1–34 (MLSQRLIGRTAVKSAFRPSGLPTVVNASRWRRGY) constitute a mitochondrion transit peptide. Residues 69–78 (EKRGTLGGTC), Lys-87, Gly-151, and 180–182 (TGS) each bind FAD. The cysteines at positions 78 and 83 are disulfide-linked. NAD(+) is bound by residues 217-224 (GGGIIGLE), Glu-240, Val-275, and Gly-310. FAD contacts are provided by residues Asp-351 and 357 to 360 (MLAH). His-483 (proton acceptor) is an active-site residue.

This sequence belongs to the class-I pyridine nucleotide-disulfide oxidoreductase family. In terms of assembly, eukaryotic pyruvate dehydrogenase (PDH) complexes are organized as a core consisting of the oligomeric dihydrolipoamide acetyl-transferase (E2), around which are arranged multiple copies of pyruvate dehydrogenase (E1), dihydrolipoamide dehydrogenase (E3) and protein X (E3BP) bound by non-covalent bonds. The Chaetomium thermophilum PDH complex contains 60 E2 units, 12 E3BP units, about 20 E1 units, and 12 or more E3 units. The units are organized in 1 E2 60-mer, 4 E3BP trimers, about 20 E1 tetramers, and a maximum of 12 E3 dimers. The E3BP trimers are bound inside the icosahedral core with tetrahedral symmetry. FAD serves as cofactor.

The protein localises to the mitochondrion. The catalysed reaction is N(6)-[(R)-dihydrolipoyl]-L-lysyl-[protein] + NAD(+) = N(6)-[(R)-lipoyl]-L-lysyl-[protein] + NADH + H(+). In terms of biological role, lipoamide dehydrogenase is a component of the alpha-ketoacid dehydrogenase complexes. This includes the pyruvate dehydrogenase complex, which catalyzes the overall conversion of pyruvate to acetyl-CoA and CO(2). Also acts as a component of the glycine cleavage system (glycine decarboxylase complex), which catalyzes the degradation of glycine. The 10-megadalton pyruvate dehydrogenase complex contains multiple copies of three enzymatic components: pyruvate dehydrogenase (E1), dihydrolipoamide acetyltransferase (E2) and lipoamide dehydrogenase (E3) and catalyzes the overall oxidative decarboxylation of pyruvate to form acetyl-CoA and CO(2). Within the complex, pyruvate and thiamine pyrophosphate (TPP or vitamin B1) are bound by pyruvate dehydrogenase E1 subunits alpha and beta and pyruvate is decarboxylated leading to the 2-carbon hydrohyethyl bound to TPP. The E2 component contains covalently-bound lipoyl cofactors and transfers the hydroxyethyl group from TPP to an oxidized form of covalently bound lipoamide, and the resulting acetyl group is then transferred to free coenzyme A to form acetyl-CoA and reduced dihydrolipoamide-E2. Finally, the flavoprotein dihydrolipoamide dehydrogenase (E3) re-oxidizes the lipoyl group of dihydrolipoamide-E2 to form lipoamide-E2 and NADH. A fourth subunit, E3BP, is responsible for tethering E3 in proximity to the core, forming the entire metabolon. The sequence is that of Dihydrolipoamide dehydrogenase from Chaetomium thermophilum (strain DSM 1495 / CBS 144.50 / IMI 039719) (Thermochaetoides thermophila).